The primary structure comprises 354 residues: Uroporphyrinogen decarboxylase (354 aa).

Substrate contacts are provided by residues 27 to 31 (RQAGR), Asp77, Tyr154, Thr209, and His327.

It belongs to the uroporphyrinogen decarboxylase family. In terms of assembly, homodimer.

Its subcellular location is the cytoplasm. The catalysed reaction is uroporphyrinogen III + 4 H(+) = coproporphyrinogen III + 4 CO2. It functions in the pathway porphyrin-containing compound metabolism; protoporphyrin-IX biosynthesis; coproporphyrinogen-III from 5-aminolevulinate: step 4/4. In terms of biological role, catalyzes the decarboxylation of four acetate groups of uroporphyrinogen-III to yield coproporphyrinogen-III. This Cronobacter sakazakii (strain ATCC BAA-894) (Enterobacter sakazakii) protein is Uroporphyrinogen decarboxylase.